The chain runs to 1500 residues: DNA-directed RNA polymerase subunit beta' (1500 aa).

4 residues coordinate Zn(2+): Cys60, Cys62, Cys75, and Cys78. Residues 180–199 (DLGGMETAQRSTQRQIEEDY) are disordered. Mg(2+)-binding residues include Asp626, Asp628, and Asp630. Zn(2+) contacts are provided by Cys1002, Cys1075, Cys1082, and Cys1085. The interval 1440-1500 (EVQQAEKSAE…DSDHPDLSSL (61 aa)) is disordered. Polar residues predominate over residues 1449 to 1468 (EPTTTALPTTNGHQAPQSDT).

The protein belongs to the RNA polymerase beta' chain family. As to quaternary structure, the RNAP catalytic core consists of 2 alpha, 1 beta, 1 beta' and 1 omega subunit. When a sigma factor is associated with the core the holoenzyme is formed, which can initiate transcription. Mg(2+) serves as cofactor. Zn(2+) is required as a cofactor.

It carries out the reaction RNA(n) + a ribonucleoside 5'-triphosphate = RNA(n+1) + diphosphate. In terms of biological role, DNA-dependent RNA polymerase catalyzes the transcription of DNA into RNA using the four ribonucleoside triphosphates as substrates. This is DNA-directed RNA polymerase subunit beta' from Chloroflexus aggregans (strain MD-66 / DSM 9485).